Reading from the N-terminus, the 257-residue chain is Ribosomal RNA small subunit methyltransferase J (257 aa).

Residues 109–110, 125–126, and D179 contribute to the S-adenosyl-L-methionine site; these read RD and ER.

Belongs to the methyltransferase superfamily. RsmJ family.

The protein localises to the cytoplasm. The enzyme catalyses guanosine(1516) in 16S rRNA + S-adenosyl-L-methionine = N(2)-methylguanosine(1516) in 16S rRNA + S-adenosyl-L-homocysteine + H(+). In terms of biological role, specifically methylates the guanosine in position 1516 of 16S rRNA. The polypeptide is Ribosomal RNA small subunit methyltransferase J (Actinobacillus succinogenes (strain ATCC 55618 / DSM 22257 / CCUG 43843 / 130Z)).